A 357-amino-acid chain; its full sequence is Eukaryotic translation initiation factor 3 subunit F (357 aa).

Residues 30 to 169 (VHIQPQAVFS…TKAYISAPVA (140 aa)) form the MPN domain. Residues 309 to 357 (VGGDKEGGEKGKDGEDGGRGGRGGKRGGGGRGGHRGEPREPREPREPAE) form a disordered region. 2 stretches are compositionally biased toward basic and acidic residues: residues 311–327 (GDKE…DGGR) and 342–357 (HRGE…EPAE).

Belongs to the eIF-3 subunit F family. Component of the eukaryotic translation initiation factor 3 (eIF-3) complex.

Its subcellular location is the cytoplasm. Its function is as follows. Component of the eukaryotic translation initiation factor 3 (eIF-3) complex, which is involved in protein synthesis of a specialized repertoire of mRNAs and, together with other initiation factors, stimulates binding of mRNA and methionyl-tRNAi to the 40S ribosome. The eIF-3 complex specifically targets and initiates translation of a subset of mRNAs involved in cell proliferation. This chain is Eukaryotic translation initiation factor 3 subunit F, found in Chaetomium globosum (strain ATCC 6205 / CBS 148.51 / DSM 1962 / NBRC 6347 / NRRL 1970) (Soil fungus).